A 1820-amino-acid chain; its full sequence is Histone-lysine N-methyltransferase, H3 lysine-9 specific (1820 aa).

Disordered regions lie at residues 1 to 54 (MPGA…TSMR), 74 to 251 (NLLP…TPVT), 284 to 618 (SLSD…APTK), 634 to 681 (SSER…KKAV), 804 to 836 (NVDD…SLSK), 850 to 893 (SSTL…VNSW), 911 to 944 (HAKK…EQLR), 966 to 996 (DVES…STDA), 1063 to 1126 (PLSV…NGAV), 1183 to 1270 (RYAV…DRTA), 1296 to 1335 (KASA…TSQQ), and 1385 to 1407 (RSEP…TDSD). Low complexity predominate over residues 11 to 31 (VDNPLVLDSSDSDDNLSGLPL). Over residues 109-129 (ADSSSPPENQNVISFLGNHSQ) the composition is skewed to polar residues. Positions 152–169 (GGENIAGQNNEANAAQAA) are enriched in low complexity. 2 stretches are compositionally biased toward polar residues: residues 174–204 (GTPS…SAIN) and 212–222 (SIPQQSPSSRA). Low complexity-rich tracts occupy residues 226–236 (RSASIASSRSR), 284–311 (SLSD…TSTT), and 339–352 (TPAT…GPSA). Over residues 361-370 (KSSDQKESPR) the composition is skewed to basic and acidic residues. A compositionally biased stretch (polar residues) spans 374–385 (SKQPSSPSSTHG). The span at 400–424 (SATSGKSSAASSRSKSRAPLSSRAA) shows a compositional bias: low complexity. Residues 433-442 (SKTTSVSSTH) show a composition bias toward polar residues. A compositionally biased stretch (low complexity) spans 443 to 459 (PPSRASPSSLPSQSQRQ). Over residues 479-510 (TLSSGTGQSTPSKFSLPTSDVASNQKNKSTGL) the composition is skewed to polar residues. Composition is skewed to low complexity over residues 514–531 (PKKP…RTST), 551–563 (QSSS…IQTS), and 594–618 (TKAT…APTK). 2 stretches are compositionally biased toward polar residues: residues 643–662 (GKSQ…TAAS) and 810–827 (SAQP…SVSS). Over residues 850 to 861 (SSTLGDSVSGLG) the composition is skewed to low complexity. Residues 869-893 (TQSMPQSPLPTTNTNNSSGIEVNSW) are compositionally biased toward polar residues. Composition is skewed to basic and acidic residues over residues 917–944 (KERE…EQLR) and 966–983 (DVES…ETRK). Over residues 1076–1089 (SSSSTSTPSLLSRS) the composition is skewed to low complexity. Low complexity predominate over residues 1296-1320 (KASAVSPVPSANRPSPAPSAKADLL). The region spanning 1516 to 1585 (LGCDCDGPCD…ECMNRVIQRG (70 aa)) is the Pre-SET domain. Zn(2+)-binding residues include C1518, C1520, C1524, C1531, C1533, C1567, C1571, C1573, and C1577. Residues 1590–1750 (TGIEIFKTKE…KHEELCISYK (161 aa)) enclose the SET domain. S-adenosyl-L-methionine is bound by residues 1600–1602 (KGW), Y1643, R1704, and 1707–1708 (NH). C1710 contacts Zn(2+). The segment at 1756–1794 (DDIPSPEPVKKKKGGKGKKQMSKTSASAHPPEMTALNSD) is disordered. Over residues 1765–1776 (KKKKGGKGKKQM) the composition is skewed to basic residues. The 17-residue stretch at 1800–1816 (VKDICRCGAKNCDGRMF) folds into the Post-SET domain. Residues C1804, C1806, and C1811 each contribute to the Zn(2+) site.

Belongs to the class V-like SAM-binding methyltransferase superfamily. Histone-lysine methyltransferase family. Suvar3-9 subfamily.

Its subcellular location is the nucleus. It localises to the chromosome. The enzyme catalyses N(6)-methyl-L-lysyl(9)-[histone H3] + S-adenosyl-L-methionine = N(6),N(6)-dimethyl-L-lysyl(9)-[histone H3] + S-adenosyl-L-homocysteine + H(+). It catalyses the reaction L-lysyl(9)-[histone H3] + S-adenosyl-L-methionine = N(6)-methyl-L-lysyl(9)-[histone H3] + S-adenosyl-L-homocysteine + H(+). Histone methyltransferase that specifically dimethylates histone H3 to form H3K9me2. H3K9me2 represents a specific tag for epigenetic transcriptional repression by recruiting HP1 proteins to methylated histones. Mainly functions in heterochromatin regions, thereby playing a central role in the establishment of constitutive heterochromatin at centromeric regions. This chain is Histone-lysine N-methyltransferase, H3 lysine-9 specific, found in Cryptococcus neoformans var. grubii serotype A (strain H99 / ATCC 208821 / CBS 10515 / FGSC 9487) (Filobasidiella neoformans var. grubii).